Consider the following 75-residue polypeptide: Exodeoxyribonuclease 7 small subunit (75 aa).

It belongs to the XseB family. As to quaternary structure, heterooligomer composed of large and small subunits.

It is found in the cytoplasm. It catalyses the reaction Exonucleolytic cleavage in either 5'- to 3'- or 3'- to 5'-direction to yield nucleoside 5'-phosphates.. In terms of biological role, bidirectionally degrades single-stranded DNA into large acid-insoluble oligonucleotides, which are then degraded further into small acid-soluble oligonucleotides. The chain is Exodeoxyribonuclease 7 small subunit from Chlamydia abortus (strain DSM 27085 / S26/3) (Chlamydophila abortus).